A 580-amino-acid chain; its full sequence is Amino-acid acetyltransferase, mitochondrial (580 aa).

Residues 403-560 (LTMQNLFDDK…KLRHQNGVVD (158 aa)) enclose the N-acetyltransferase domain.

It belongs to the acetyltransferase family.

The protein resides in the mitochondrion. The enzyme catalyses L-glutamate + acetyl-CoA = N-acetyl-L-glutamate + CoA + H(+). It functions in the pathway amino-acid biosynthesis; L-arginine biosynthesis; N(2)-acetyl-L-ornithine from L-glutamate: step 1/4. Functionally, N-acetylglutamate synthase involved in arginine biosynthesis. This is Amino-acid acetyltransferase, mitochondrial (ARG2) from Candida albicans (strain SC5314 / ATCC MYA-2876) (Yeast).